The chain runs to 232 residues: Large ribosomal subunit protein uL1 (232 aa).

It belongs to the universal ribosomal protein uL1 family. As to quaternary structure, part of the 50S ribosomal subunit.

Its function is as follows. Binds directly to 23S rRNA. The L1 stalk is quite mobile in the ribosome, and is involved in E site tRNA release. Functionally, protein L1 is also a translational repressor protein, it controls the translation of the L11 operon by binding to its mRNA. In Bacteroides thetaiotaomicron (strain ATCC 29148 / DSM 2079 / JCM 5827 / CCUG 10774 / NCTC 10582 / VPI-5482 / E50), this protein is Large ribosomal subunit protein uL1.